Here is a 398-residue protein sequence, read N- to C-terminus: tRNA-specific 2-thiouridylase MnmA (398 aa).

ATP-binding positions include 19-26 and L45; that span reads AMSGGVDS. The active-site Nucleophile is C113. C113 and C210 are disulfide-bonded. Residue G137 coordinates ATP. The interval 160–162 is interaction with tRNA; it reads RDQ. C210 (cysteine persulfide intermediate) is an active-site residue.

This sequence belongs to the MnmA/TRMU family.

Its subcellular location is the cytoplasm. The catalysed reaction is S-sulfanyl-L-cysteinyl-[protein] + uridine(34) in tRNA + AH2 + ATP = 2-thiouridine(34) in tRNA + L-cysteinyl-[protein] + A + AMP + diphosphate + H(+). In terms of biological role, catalyzes the 2-thiolation of uridine at the wobble position (U34) of tRNA, leading to the formation of s(2)U34. The chain is tRNA-specific 2-thiouridylase MnmA from Rhodopseudomonas palustris (strain BisB5).